The chain runs to 356 residues: Peptidyl-prolyl isomerase CWC27 (356 aa).

Positions 5–205 (TTAKVVLTTT…KPKRKLQVNH (201 aa)) constitute a PPIase cyclophilin-type domain. 3 disordered regions span residues 172–214 (KAGA…EEPV), 234–266 (NVAK…DAED), and 279–331 (LEKF…EDDD). Residues 181–192 (AESRENKSGSRD) show a composition bias toward basic and acidic residues. Basic residues predominate over residues 193–202 (RPKKPKRKLQ). Positions 279–294 (LEKFRNMSRTKPDTKP) are enriched in basic and acidic residues.

The protein belongs to the cyclophilin-type PPIase family. CWC27 subfamily. In terms of assembly, associated with the spliceosome.

It is found in the cytoplasm. It localises to the nucleus. It catalyses the reaction [protein]-peptidylproline (omega=180) = [protein]-peptidylproline (omega=0). In terms of biological role, PPIases accelerate the folding of proteins. It catalyzes the cis-trans isomerization of proline imidic peptide bonds in oligopeptides. Involved in pre-mRNA splicing. This chain is Peptidyl-prolyl isomerase CWC27 (CWC27), found in Yarrowia lipolytica (strain CLIB 122 / E 150) (Yeast).